A 909-amino-acid chain; its full sequence is Villin-1 (909 aa).

Gelsolin-like repeat units lie at residues 29–79 (KQLI…VDSI), 149–189 (VRVK…QEKA), 262–305 (GNLH…TERK), 391–448 (LKVW…QDRA), 529–569 (MQAI…SDHE), and 631–672 (LKVK…KSKE). Disordered regions lie at residues 733–781 (SLKG…CSSE) and 816–835 (DGVA…QKPR). The span at 752–762 (QSKDNASRDLQ) shows a compositional bias: basic and acidic residues. Ser780 is subject to Phosphoserine. An HP domain is found at 844 to 909 (SLESLAYSYE…NKLKISLHLF (66 aa)).

Belongs to the villin/gelsolin family. Expressed in all tissues examined. Mainly detected in the vascular tissue and the pericycle of roots and in the vasculature of leaves. Not expressed in the root cap.

The protein resides in the cytoplasm. It is found in the cytoskeleton. Functionally, binds actin and actin filament bundles in a Ca(2+)/calmodulin-insensitive manner, but is unable to sever, cap, and nucleate actin filament formation in vitro. Does not protect individual filaments from severing by VLN3 (AC O81645). The polypeptide is Villin-1 (Arabidopsis thaliana (Mouse-ear cress)).